The primary structure comprises 467 residues: Dynactin subunit 4 (467 aa).

N-acetylalanine is present on Ala2. Lys222 is covalently cross-linked (Glycyl lysine isopeptide (Lys-Gly) (interchain with G-Cter in SUMO2)). The residue at position 414 (Thr414) is a Phosphothreonine.

It belongs to the dynactin subunit 4 family. Subunit of dynactin, a multiprotein complex part of a tripartite complex with dynein and a adapter, such as BICDL1, BICD2 or HOOK3. The dynactin complex is built around ACTR1A/ACTB filament and consists of an actin-related filament composed of a shoulder domain, a pointed end and a barbed end. Its length is defined by its flexible shoulder domain. The soulder is composed of 2 DCTN1 subunits, 4 DCTN2 and 2 DCTN3. The 4 DCNT2 (via N-terminus) bind the ACTR1A filament and act as molecular rulers to determine the length. The pointed end is important for binding dynein-dynactin cargo adapters. Consists of 4 subunits: ACTR10, DCNT4, DCTN5 and DCTN6. The barbed end is composed of a CAPZA1:CAPZB heterodimers, which binds ACTR1A/ACTB filament and dynactin and stabilizes dynactin. Interacts with ATP7B, but not ATP7A, in a copper-dependent manner. Interacts with ANK2; this interaction is required for localization at costameres. Interacts with N4BP2L1.

It localises to the cytoplasm. The protein localises to the cytoskeleton. Its subcellular location is the microtubule organizing center. The protein resides in the centrosome. It is found in the stress fiber. It localises to the cell cortex. The protein localises to the myofibril. Its subcellular location is the sarcomere. In terms of biological role, part of the dynactin complex that activates the molecular motor dynein for ultra-processive transport along microtubules. Together with dynein is involved in spindle assembly and cytokinesis. This Sus scrofa (Pig) protein is Dynactin subunit 4 (DCTN4).